The primary structure comprises 211 residues: tRNA (guanine-N(7)-)-methyltransferase (211 aa).

E44, D69, D96, and D118 together coordinate S-adenosyl-L-methionine. The active site involves D118. K122 lines the substrate pocket. An interaction with RNA region spans residues 124–129 (KHEKRR). Residues D154 and 191-194 (TEYE) contribute to the substrate site.

This sequence belongs to the class I-like SAM-binding methyltransferase superfamily. TrmB family.

It carries out the reaction guanosine(46) in tRNA + S-adenosyl-L-methionine = N(7)-methylguanosine(46) in tRNA + S-adenosyl-L-homocysteine. The protein operates within tRNA modification; N(7)-methylguanine-tRNA biosynthesis. Its function is as follows. Catalyzes the formation of N(7)-methylguanine at position 46 (m7G46) in tRNA. The protein is tRNA (guanine-N(7)-)-methyltransferase of Streptococcus agalactiae serotype Ia (strain ATCC 27591 / A909 / CDC SS700).